Consider the following 213-residue polypeptide: dITP/XTP pyrophosphatase (213 aa).

Residue 17–22 (SNNAGK) coordinates substrate. Mg(2+)-binding residues include E49 and D78. Catalysis depends on D78, which acts as the Proton acceptor. Residues S79, 164–167 (FGYD), K187, and 192–193 (HR) contribute to the substrate site.

This sequence belongs to the HAM1 NTPase family. In terms of assembly, homodimer. The cofactor is Mg(2+).

The catalysed reaction is XTP + H2O = XMP + diphosphate + H(+). It carries out the reaction dITP + H2O = dIMP + diphosphate + H(+). It catalyses the reaction ITP + H2O = IMP + diphosphate + H(+). Its function is as follows. Pyrophosphatase that catalyzes the hydrolysis of nucleoside triphosphates to their monophosphate derivatives, with a high preference for the non-canonical purine nucleotides XTP (xanthosine triphosphate), dITP (deoxyinosine triphosphate) and ITP. Seems to function as a house-cleaning enzyme that removes non-canonical purine nucleotides from the nucleotide pool, thus preventing their incorporation into DNA/RNA and avoiding chromosomal lesions. This chain is dITP/XTP pyrophosphatase, found in Bordetella bronchiseptica (strain ATCC BAA-588 / NCTC 13252 / RB50) (Alcaligenes bronchisepticus).